Consider the following 462-residue polypeptide: Glycine--tRNA ligase (462 aa).

Substrate is bound by residues Arg100 and Glu175. Residues Arg207 to Glu209, Phe217 to Phe222, Glu291 to Leu292, and Gly335 to Arg338 contribute to the ATP site. Substrate is bound at residue Phe222–Glu226. Glu331 to Gly335 contributes to the substrate binding site.

This sequence belongs to the class-II aminoacyl-tRNA synthetase family. As to quaternary structure, homodimer.

It localises to the cytoplasm. The catalysed reaction is tRNA(Gly) + glycine + ATP = glycyl-tRNA(Gly) + AMP + diphosphate. In terms of biological role, catalyzes the attachment of glycine to tRNA(Gly). The protein is Glycine--tRNA ligase of Clostridium acetobutylicum (strain ATCC 824 / DSM 792 / JCM 1419 / IAM 19013 / LMG 5710 / NBRC 13948 / NRRL B-527 / VKM B-1787 / 2291 / W).